Reading from the N-terminus, the 82-residue chain is Sulfur carrier protein TusA (82 aa).

Cys-19 (cysteine persulfide intermediate) is an active-site residue.

Belongs to the sulfur carrier protein TusA family.

It localises to the cytoplasm. In terms of biological role, sulfur carrier protein which probably makes part of a sulfur-relay system. The protein is Sulfur carrier protein TusA of Tolumonas auensis (strain DSM 9187 / NBRC 110442 / TA 4).